We begin with the raw amino-acid sequence, 319 residues long: tRNA U34 carboxymethyltransferase (319 aa).

Carboxy-S-adenosyl-L-methionine contacts are provided by residues K88, W102, K107, G126, L176–E177, M192, Y196, and R311.

Belongs to the class I-like SAM-binding methyltransferase superfamily. CmoB family. As to quaternary structure, homotetramer.

The catalysed reaction is carboxy-S-adenosyl-L-methionine + 5-hydroxyuridine(34) in tRNA = 5-carboxymethoxyuridine(34) in tRNA + S-adenosyl-L-homocysteine + H(+). Its function is as follows. Catalyzes carboxymethyl transfer from carboxy-S-adenosyl-L-methionine (Cx-SAM) to 5-hydroxyuridine (ho5U) to form 5-carboxymethoxyuridine (cmo5U) at position 34 in tRNAs. This chain is tRNA U34 carboxymethyltransferase, found in Pseudomonas syringae pv. tomato (strain ATCC BAA-871 / DC3000).